A 23-amino-acid polypeptide reads, in one-letter code: Basic phospholipase A2 intermexin (23 aa).

The protein belongs to the phospholipase A2 family. Group II subfamily. Requires Ca(2+) as cofactor. In terms of processing, contains 7 disulfide bonds. As to expression, expressed by the venom gland.

It is found in the secreted. The catalysed reaction is a 1,2-diacyl-sn-glycero-3-phosphocholine + H2O = a 1-acyl-sn-glycero-3-phosphocholine + a fatty acid + H(+). Its function is as follows. Snake venom phospholipase A2 (PLA2) that shows presynaptic neurotoxicity and low myotoxicity. PLA2 catalyzes the calcium-dependent hydrolysis of the 2-acyl groups in 3-sn-phosphoglycerides. The polypeptide is Basic phospholipase A2 intermexin (Gloydius intermedius (Central Asian pit viper)).